Reading from the N-terminus, the 128-residue chain is 3-aminoacrylate deaminase RutC (128 aa).

The protein belongs to the RutC family.

It catalyses the reaction (Z)-3-aminoacrylate + H2O + H(+) = 3-oxopropanoate + NH4(+). Its function is as follows. Involved in pyrimidine catabolism. Catalyzes the deamination of 3-aminoacrylate to malonic semialdehyde, a reaction that can also occur spontaneously. RutC may facilitate the reaction and modulate the metabolic fitness, rather than catalyzing essential functions. The polypeptide is 3-aminoacrylate deaminase RutC (Pantoea ananatis (strain LMG 20103)).